A 329-amino-acid polypeptide reads, in one-letter code: Gut-specific cysteine proteinase (329 aa).

Residues 1 to 15 form the signal peptide; that stretch reads MKFLILTALCAVTLA. Residues 16–84 constitute a propeptide, activation peptide; the sequence is FVPINHQSAV…ATEQEVVLAS (69 aa). 6 disulfides stabilise this stretch: Cys-98-Cys-127, Cys-110-Cys-155, Cys-146-Cys-204, Cys-147-Cys-151, Cys-183-Cys-208, and Cys-191-Cys-196. Residue Cys-113 is part of the active site. Catalysis depends on residues His-275 and Asn-295.

It belongs to the peptidase C1 family. Larvae exhibit strong expression in gut cells and weak expression in hypodermal cells. Adults exhibit the reverse: strong expression in hypodermal cells and weaker expression in gut cells.

Functionally, thiol protease. Has a role as a digestive enzyme. This chain is Gut-specific cysteine proteinase (cpr-1), found in Caenorhabditis elegans.